The sequence spans 555 residues: Dihydroxy-acid dehydratase (555 aa).

Residue Asp78 coordinates Mg(2+). Cys119 is a binding site for [2Fe-2S] cluster. Residues Asp120 and Lys121 each coordinate Mg(2+). Position 121 is an N6-carboxylysine (Lys121). Cys191 provides a ligand contact to [2Fe-2S] cluster. Glu444 serves as a coordination point for Mg(2+). Ser470 serves as the catalytic Proton acceptor.

It belongs to the IlvD/Edd family. Homodimer. Requires [2Fe-2S] cluster as cofactor. The cofactor is Mg(2+).

It catalyses the reaction (2R)-2,3-dihydroxy-3-methylbutanoate = 3-methyl-2-oxobutanoate + H2O. The enzyme catalyses (2R,3R)-2,3-dihydroxy-3-methylpentanoate = (S)-3-methyl-2-oxopentanoate + H2O. It functions in the pathway amino-acid biosynthesis; L-isoleucine biosynthesis; L-isoleucine from 2-oxobutanoate: step 3/4. The protein operates within amino-acid biosynthesis; L-valine biosynthesis; L-valine from pyruvate: step 3/4. Functionally, functions in the biosynthesis of branched-chain amino acids. Catalyzes the dehydration of (2R,3R)-2,3-dihydroxy-3-methylpentanoate (2,3-dihydroxy-3-methylvalerate) into 2-oxo-3-methylpentanoate (2-oxo-3-methylvalerate) and of (2R)-2,3-dihydroxy-3-methylbutanoate (2,3-dihydroxyisovalerate) into 2-oxo-3-methylbutanoate (2-oxoisovalerate), the penultimate precursor to L-isoleucine and L-valine, respectively. This chain is Dihydroxy-acid dehydratase, found in Nitratidesulfovibrio vulgaris (strain DSM 19637 / Miyazaki F) (Desulfovibrio vulgaris).